We begin with the raw amino-acid sequence, 232 residues long: Probable thiopurine S-methyltransferase (232 aa).

Residues 14–25, L54, E75, and R137 each bind S-adenosyl-L-methionine; that span reads WENRWQEGRTGF. F25 contacts substrate.

It belongs to the class I-like SAM-binding methyltransferase superfamily. TPMT family.

It localises to the cytoplasm. It carries out the reaction S-adenosyl-L-methionine + a thiopurine = S-adenosyl-L-homocysteine + a thiopurine S-methylether.. The protein is Probable thiopurine S-methyltransferase (tpmt) of Danio rerio (Zebrafish).